Consider the following 252-residue polypeptide: MGRGRVELKRIENKINRQVTFSKRRNGLLKKAYELSVLCEAEVALIIFSSRGKLYEFGSAGITKTLERYQRCCLNPQDNCGERETQSWYQEVSKLKAKFEALQRTQRHLLGEDLGALSVKELQNLEKQLEGALAQARQRKTQIMMEQMEELRRKERHLGDVNKQLKIKVSLELSSFEGEGQGVPFPWSNCNASLDEAGSSTFHVHHSQSNHMDCDLPDPVLQIGYHQYMAADGASGSRNMAVESNIIHGWGL.

Residues 1–61 (MGRGRVELKR…GKLYEFGSAG (61 aa)) form the MADS-box domain. Short sequence motifs (nuclear localization signal) lie at residues 8-15 (LKRIENKI) and 138-145 (QRKTQIMM). One can recognise a K-box domain in the interval 85-175 (TQSWYQEVSK…KIKVSLELSS (91 aa)).

Restricted to flowers.

It localises to the nucleus. In terms of biological role, probable transcription factor involved in fruit development. Key regulator of the transition between the state of 'ovary arrest' imposed towards anthesis and the fertilization-triggered fruit set. In Solanum lycopersicum (Tomato), this protein is Protein AGAMOUS-LIKE 6.